An 821-amino-acid polypeptide reads, in one-letter code: DNA gyrase subunit A (821 aa).

Residues 35 to 500 (LPDVRDGLKP…GLETIEDEDL (466 aa)) enclose the Topo IIA-type catalytic domain. The active-site O-(5'-phospho-DNA)-tyrosine intermediate is the Tyr-123. The GyrA-box signature appears at 527–533 (QKRGGKG).

Belongs to the type II topoisomerase GyrA/ParC subunit family. In terms of assembly, heterotetramer, composed of two GyrA and two GyrB chains. In the heterotetramer, GyrA contains the active site tyrosine that forms a transient covalent intermediate with DNA, while GyrB binds cofactors and catalyzes ATP hydrolysis.

It localises to the cytoplasm. The catalysed reaction is ATP-dependent breakage, passage and rejoining of double-stranded DNA.. Its function is as follows. A type II topoisomerase that negatively supercoils closed circular double-stranded (ds) DNA in an ATP-dependent manner to modulate DNA topology and maintain chromosomes in an underwound state. Negative supercoiling favors strand separation, and DNA replication, transcription, recombination and repair, all of which involve strand separation. Also able to catalyze the interconversion of other topological isomers of dsDNA rings, including catenanes and knotted rings. Type II topoisomerases break and join 2 DNA strands simultaneously in an ATP-dependent manner. The sequence is that of DNA gyrase subunit A from Bacillus subtilis (strain 168).